The sequence spans 198 residues: Adenine phosphoribosyltransferase (198 aa).

Belongs to the purine/pyrimidine phosphoribosyltransferase family. Homodimer.

Its subcellular location is the cytoplasm. The catalysed reaction is AMP + diphosphate = 5-phospho-alpha-D-ribose 1-diphosphate + adenine. It functions in the pathway purine metabolism; AMP biosynthesis via salvage pathway; AMP from adenine: step 1/1. In terms of biological role, catalyzes a salvage reaction resulting in the formation of AMP, that is energically less costly than de novo synthesis. The protein is Adenine phosphoribosyltransferase of Serratia proteamaculans (strain 568).